The chain runs to 465 residues: ATP synthase subunit beta (465 aa).

149 to 156 is a binding site for ATP; the sequence is GGAGVGKT.

Belongs to the ATPase alpha/beta chains family. F-type ATPases have 2 components, CF(1) - the catalytic core - and CF(0) - the membrane proton channel. CF(1) has five subunits: alpha(3), beta(3), gamma(1), delta(1), epsilon(1). CF(0) has three main subunits: a(1), b(2) and c(9-12). The alpha and beta chains form an alternating ring which encloses part of the gamma chain. CF(1) is attached to CF(0) by a central stalk formed by the gamma and epsilon chains, while a peripheral stalk is formed by the delta and b chains.

The protein localises to the cell inner membrane. The catalysed reaction is ATP + H2O + 4 H(+)(in) = ADP + phosphate + 5 H(+)(out). Produces ATP from ADP in the presence of a proton gradient across the membrane. The catalytic sites are hosted primarily by the beta subunits. The protein is ATP synthase subunit beta of Dictyoglomus turgidum (strain DSM 6724 / Z-1310).